We begin with the raw amino-acid sequence, 270 residues long: ATP synthase subunit a (270 aa).

The next 5 helical transmembrane spans lie at 38–58 (VHID…GIFY), 98–118 (IAPL…MDLV), 143–163 (DVNI…YYSI), 208–228 (LFGN…MLPW), and 239–259 (AIFH…LTIV).

This sequence belongs to the ATPase A chain family. In terms of assembly, F-type ATPases have 2 components, CF(1) - the catalytic core - and CF(0) - the membrane proton channel. CF(1) has five subunits: alpha(3), beta(3), gamma(1), delta(1), epsilon(1). CF(0) has three main subunits: a(1), b(2) and c(9-12). The alpha and beta chains form an alternating ring which encloses part of the gamma chain. CF(1) is attached to CF(0) by a central stalk formed by the gamma and epsilon chains, while a peripheral stalk is formed by the delta and b chains.

The protein localises to the cell inner membrane. Key component of the proton channel; it plays a direct role in the translocation of protons across the membrane. This Vibrio parahaemolyticus serotype O3:K6 (strain RIMD 2210633) protein is ATP synthase subunit a.